Reading from the N-terminus, the 504-residue chain is Apolipoprotein N-acyltransferase (504 aa).

6 helical membrane-spanning segments follow: residues 6-26, 47-67, 83-103, 105-125, 153-173, and 186-206; these read LALT…YALV, ALYG…WVFV, LTAL…WLGV, AGGG…WVVT, IAPV…AGLL, and FALL…KVQW. Residues 219 to 457 form the CN hydrolase domain; it reads LQGNVPQDQK…REALTGMMQP (239 aa). Glu258 (proton acceptor) is an active-site residue. The active site involves Lys317. Cys369 (nucleophile) is an active-site residue. The chain crosses the membrane as a helical span at residues 465 to 485; the sequence is ALWGDWPAIGLCAGIVGICFA.

Belongs to the CN hydrolase family. Apolipoprotein N-acyltransferase subfamily.

The protein localises to the cell inner membrane. It catalyses the reaction N-terminal S-1,2-diacyl-sn-glyceryl-L-cysteinyl-[lipoprotein] + a glycerophospholipid = N-acyl-S-1,2-diacyl-sn-glyceryl-L-cysteinyl-[lipoprotein] + a 2-acyl-sn-glycero-3-phospholipid + H(+). It participates in protein modification; lipoprotein biosynthesis (N-acyl transfer). Its function is as follows. Catalyzes the phospholipid dependent N-acylation of the N-terminal cysteine of apolipoprotein, the last step in lipoprotein maturation. This chain is Apolipoprotein N-acyltransferase, found in Methylococcus capsulatus (strain ATCC 33009 / NCIMB 11132 / Bath).